Here is a 290-residue protein sequence, read N- to C-terminus: ATP phosphoribosyltransferase (290 aa).

This sequence belongs to the ATP phosphoribosyltransferase family. Long subfamily. Mg(2+) serves as cofactor.

It localises to the cytoplasm. The enzyme catalyses 1-(5-phospho-beta-D-ribosyl)-ATP + diphosphate = 5-phospho-alpha-D-ribose 1-diphosphate + ATP. It participates in amino-acid biosynthesis; L-histidine biosynthesis; L-histidine from 5-phospho-alpha-D-ribose 1-diphosphate: step 1/9. Feedback inhibited by histidine. Catalyzes the condensation of ATP and 5-phosphoribose 1-diphosphate to form N'-(5'-phosphoribosyl)-ATP (PR-ATP). Has a crucial role in the pathway because the rate of histidine biosynthesis seems to be controlled primarily by regulation of HisG enzymatic activity. The sequence is that of ATP phosphoribosyltransferase (hisG) from Saccharolobus solfataricus (strain ATCC 35092 / DSM 1617 / JCM 11322 / P2) (Sulfolobus solfataricus).